Here is a 353-residue protein sequence, read N- to C-terminus: Histidinol-phosphate aminotransferase (353 aa).

Lysine 218 bears the N6-(pyridoxal phosphate)lysine mark.

This sequence belongs to the class-II pyridoxal-phosphate-dependent aminotransferase family. Histidinol-phosphate aminotransferase subfamily. In terms of assembly, homodimer. Pyridoxal 5'-phosphate is required as a cofactor.

The enzyme catalyses L-histidinol phosphate + 2-oxoglutarate = 3-(imidazol-4-yl)-2-oxopropyl phosphate + L-glutamate. It functions in the pathway amino-acid biosynthesis; L-histidine biosynthesis; L-histidine from 5-phospho-alpha-D-ribose 1-diphosphate: step 7/9. The protein is Histidinol-phosphate aminotransferase of Synechococcus sp. (strain JA-2-3B'a(2-13)) (Cyanobacteria bacterium Yellowstone B-Prime).